We begin with the raw amino-acid sequence, 119 residues long: Protein Wnt-4 (119 aa).

Ser-1 carries O-palmitoleoyl serine; by PORCN lipidation. 2 disulfides stabilise this stretch: Cys-69/Cys-100 and Cys-85/Cys-95. Asn-86 carries N-linked (GlcNAc...) asparagine glycosylation.

Belongs to the Wnt family. Post-translationally, palmitoleoylation is required for efficient binding to frizzled receptors. Depalmitoleoylation leads to Wnt signaling pathway inhibition.

It is found in the secreted. It localises to the extracellular space. The protein localises to the extracellular matrix. Its function is as follows. Ligand for members of the frizzled family of seven transmembrane receptors. Plays an important role in embryonic development. In Eptatretus stoutii (Pacific hagfish), this protein is Protein Wnt-4 (WNT-4).